A 427-amino-acid polypeptide reads, in one-letter code: Serine--tRNA ligase (427 aa).

231–233 (TAE) is a binding site for L-serine. 262–264 (RSE) is a binding site for ATP. An L-serine-binding site is contributed by E285. 349–352 (EISS) provides a ligand contact to ATP. L-serine is bound at residue S385.

Belongs to the class-II aminoacyl-tRNA synthetase family. Type-1 seryl-tRNA synthetase subfamily. In terms of assembly, homodimer. The tRNA molecule binds across the dimer.

It is found in the cytoplasm. It carries out the reaction tRNA(Ser) + L-serine + ATP = L-seryl-tRNA(Ser) + AMP + diphosphate + H(+). The enzyme catalyses tRNA(Sec) + L-serine + ATP = L-seryl-tRNA(Sec) + AMP + diphosphate + H(+). The protein operates within aminoacyl-tRNA biosynthesis; selenocysteinyl-tRNA(Sec) biosynthesis; L-seryl-tRNA(Sec) from L-serine and tRNA(Sec): step 1/1. Catalyzes the attachment of serine to tRNA(Ser). Is also able to aminoacylate tRNA(Sec) with serine, to form the misacylated tRNA L-seryl-tRNA(Sec), which will be further converted into selenocysteinyl-tRNA(Sec). This Listeria welshimeri serovar 6b (strain ATCC 35897 / DSM 20650 / CCUG 15529 / CIP 8149 / NCTC 11857 / SLCC 5334 / V8) protein is Serine--tRNA ligase.